A 698-amino-acid chain; its full sequence is Capon-like protein (698 aa).

The PID domain maps to 25 to 194 (FFHGITFQAK…SELLDVEQIS (170 aa)). The disordered stretch occupies residues 191 to 240 (EQISEQQLSEDGERGGGDNETPKKEHLAITPDLNHTQPQRPNHLDIMPSH). Residues 201 to 217 (DGERGGGDNETPKKEHL) are compositionally biased toward basic and acidic residues. 3 coiled-coil regions span residues 265-327 (RSEI…LASL), 379-484 (NQQL…LNAN), and 554-583 (LNED…GNLA). Residues 396–423 (SQHLQNLQQQQQQQQQQQQQQTQAAPTA) are compositionally biased toward low complexity. Residues 396 to 460 (SQHLQNLQQQ…QQQQQQQQDA (65 aa)) are disordered. The segment covering 436 to 447 (YPSMSALQSISN) has biased composition (polar residues). A compositionally biased stretch (low complexity) spans 448–458 (QLQQQQQQQQQ). The segment at 588–698 (GGSTSTRDTS…RTTWARHTTK (111 aa)) is disordered. Low complexity predominate over residues 590–640 (STSTRDTSRSSSTLDSPSSPRLRSSNNNISPGSSNGNQNHNNNSNSNSSSS). Composition is skewed to polar residues over residues 662-672 (LSATPSFITRS) and 679-698 (NRSQ…HTTK).

In terms of tissue distribution, expressed at higher level in wing imaginal disk.

In terms of biological role, putative adapter protein. The sequence is that of Capon-like protein from Drosophila melanogaster (Fruit fly).